Consider the following 633-residue polypeptide: Phosphomethylpyrimidine synthase (633 aa).

Polar residues predominate over residues 1–13 (MNIRSNPDTTLPA). The interval 1–20 (MNIRSNPDTTLPAVTTGPLP) is disordered. Residues Asn221, Met250, Tyr279, His315, 335–337 (SRG), 376–379 (DGLR), and Glu415 contribute to the substrate site. Residue His419 coordinates Zn(2+). Tyr442 is a binding site for substrate. Zn(2+) is bound at residue His483. The [4Fe-4S] cluster site is built by Cys563, Cys566, and Cys571.

It belongs to the ThiC family. In terms of assembly, homodimer. The cofactor is [4Fe-4S] cluster.

The catalysed reaction is 5-amino-1-(5-phospho-beta-D-ribosyl)imidazole + S-adenosyl-L-methionine = 4-amino-2-methyl-5-(phosphooxymethyl)pyrimidine + CO + 5'-deoxyadenosine + formate + L-methionine + 3 H(+). The protein operates within cofactor biosynthesis; thiamine diphosphate biosynthesis. Catalyzes the synthesis of the hydroxymethylpyrimidine phosphate (HMP-P) moiety of thiamine from aminoimidazole ribotide (AIR) in a radical S-adenosyl-L-methionine (SAM)-dependent reaction. In Bradyrhizobium sp. (strain ORS 278), this protein is Phosphomethylpyrimidine synthase.